A 1375-amino-acid polypeptide reads, in one-letter code: DNA-directed RNA polymerase subunit beta (1375 aa).

Belongs to the RNA polymerase beta chain family. The RNAP catalytic core consists of 2 alpha, 1 beta, 1 beta' and 1 omega subunit. When a sigma factor is associated with the core the holoenzyme is formed, which can initiate transcription.

It catalyses the reaction RNA(n) + a ribonucleoside 5'-triphosphate = RNA(n+1) + diphosphate. Functionally, DNA-dependent RNA polymerase catalyzes the transcription of DNA into RNA using the four ribonucleoside triphosphates as substrates. The chain is DNA-directed RNA polymerase subunit beta from Malacoplasma penetrans (strain HF-2) (Mycoplasma penetrans).